The primary structure comprises 472 residues: Probable serine/threonine-protein kinase At1g01540 (472 aa).

The chain crosses the membrane as a helical span at residues 24–44 (LWVVIGILLGSLIVIALFLLS). Phosphothreonine is present on residues T67 and T143. Residues 154 to 431 (LCEENVIGEG…IHMLEAEDLL (278 aa)) form the Protein kinase domain. ATP contacts are provided by residues 160–168 (IGEGGYGIV) and K182. Residue Y227 is modified to Phosphotyrosine. Catalysis depends on D280, which acts as the Proton acceptor. The residue at position 284 (S284) is a Phosphoserine. Phosphothreonine is present on residues T314 and T319. Y327 is modified (phosphotyrosine). Over residues 437–449 (RTTRDHGSRERQE) the composition is skewed to basic and acidic residues. The tract at residues 437 to 472 (RTTRDHGSRERQETAVVAAGSESGESGSRHHQQKQR) is disordered. Residues 451–462 (AVVAAGSESGES) are compositionally biased toward low complexity.

This sequence belongs to the protein kinase superfamily. Ser/Thr protein kinase family.

Its subcellular location is the membrane. It catalyses the reaction L-seryl-[protein] + ATP = O-phospho-L-seryl-[protein] + ADP + H(+). The enzyme catalyses L-threonyl-[protein] + ATP = O-phospho-L-threonyl-[protein] + ADP + H(+). This Arabidopsis thaliana (Mouse-ear cress) protein is Probable serine/threonine-protein kinase At1g01540.